Reading from the N-terminus, the 496-residue chain is Solute carrier family 2, facilitated glucose transporter member 3 (496 aa).

At Met1–Leu11 the chain is on the cytoplasmic side. A helical membrane pass occupies residues Ile12–Asn33. Over Ala34–Ser65 the chain is Extracellular. Residue Asn44 is glycosylated (N-linked (GlcNAc...) asparagine). The chain crosses the membrane as a helical span at residues Leu66–Phe86. Topologically, residues Asn87–Arg91 are cytoplasmic. A helical transmembrane segment spans residues Arg92–Ser112. Residues Lys113 to Glu119 lie on the Extracellular side of the membrane. Residues Met120–Ile143 form a helical membrane-spanning segment. Residues Ser144–Ala154 are Cytoplasmic-facing. The chain crosses the membrane as a helical span at residues Phe155 to Leu175. Position 160 (Gln160) interacts with D-glucose. Residues Glu176 to Leu184 are Extracellular-facing. A helical membrane pass occupies residues Trp185–Phe205. The Cytoplasmic segment spans residues Cys206–Pro270. The chain crosses the membrane as a helical span at residues Ile271 to Tyr291. The interval Gln278–Ser280 is important for selectivity against fructose. D-glucose is bound by residues Gln281–Gln282 and Asn287. The Extracellular portion of the chain corresponds to Tyr292–Pro305. Residues Val306 to Leu326 traverse the membrane as a helical segment. Residue Asn316 participates in D-glucose binding. Topologically, residues Val327–Arg332 are cytoplasmic. A helical transmembrane segment spans residues Arg333–Ala353. Residues Leu354–Arg362 lie on the Extracellular side of the membrane. The chain crosses the membrane as a helical span at residues Tyr363–Val388. D-glucose is bound by residues Glu377 and Trp385. The Cytoplasmic portion of the chain corresponds to Ala389 to Pro398. A helical transmembrane segment spans residues Ala399–Phe419. The Extracellular portion of the chain corresponds to Pro420–Pro428. The chain crosses the membrane as a helical span at residues Tyr429 to Val449. Over Pro450–Ala496 the chain is Cytoplasmic. Positions Phe464 to Ala496 are disordered.

It belongs to the major facilitator superfamily. Sugar transporter (TC 2.A.1.1) family. Glucose transporter subfamily.

It localises to the cell membrane. It is found in the perikaryon. The protein resides in the cell projection. It catalyses the reaction D-glucose(out) = D-glucose(in). It carries out the reaction D-galactose(in) = D-galactose(out). Deoxyglucose transport is inhibited by D-glucose, D-galactose and maltose. Galactose transport is inhibited by D-glucose and maltose. Its function is as follows. Facilitative glucose transporter. Can also mediate the uptake of various other monosaccharides across the cell membrane. Mediates the uptake of glucose, 2-deoxyglucose, galactose, mannose, xylose and fucose, and probably also dehydroascorbate. Does not mediate fructose transport. Required for mesendoderm differentiation. The sequence is that of Solute carrier family 2, facilitated glucose transporter member 3 from Gallus gallus (Chicken).